The chain runs to 153 residues: Cell division protein SepF (153 aa).

The protein belongs to the SepF family. Homodimer. Interacts with FtsZ.

The protein resides in the cytoplasm. Its function is as follows. Cell division protein that is part of the divisome complex and is recruited early to the Z-ring. Probably stimulates Z-ring formation, perhaps through the cross-linking of FtsZ protofilaments. Its function overlaps with FtsA. The chain is Cell division protein SepF from Clostridium tetani (strain Massachusetts / E88).